The chain runs to 257 residues: Imidazole glycerol phosphate synthase subunit HisF (257 aa).

Residues Asp11 and Asp130 contribute to the active site.

This sequence belongs to the HisA/HisF family. Heterodimer of HisH and HisF.

The protein localises to the cytoplasm. It catalyses the reaction 5-[(5-phospho-1-deoxy-D-ribulos-1-ylimino)methylamino]-1-(5-phospho-beta-D-ribosyl)imidazole-4-carboxamide + L-glutamine = D-erythro-1-(imidazol-4-yl)glycerol 3-phosphate + 5-amino-1-(5-phospho-beta-D-ribosyl)imidazole-4-carboxamide + L-glutamate + H(+). It participates in amino-acid biosynthesis; L-histidine biosynthesis; L-histidine from 5-phospho-alpha-D-ribose 1-diphosphate: step 5/9. IGPS catalyzes the conversion of PRFAR and glutamine to IGP, AICAR and glutamate. The HisF subunit catalyzes the cyclization activity that produces IGP and AICAR from PRFAR using the ammonia provided by the HisH subunit. This chain is Imidazole glycerol phosphate synthase subunit HisF, found in Pseudoalteromonas translucida (strain TAC 125).